A 321-amino-acid chain; its full sequence is Serpentine receptor class delta-63 (321 aa).

The next 7 helical transmembrane spans lie at 14–34, 41–61, 83–103, 128–148, 190–208, 240–260, and 273–293; these read LVYM…YNFT, VKYF…MAFA, YIGP…GIVV, LWTL…IVII, AAMS…GTYW, NFQI…YFMI, and TITV…IYFI.

It belongs to the nematode receptor-like protein srd family.

The protein localises to the membrane. The polypeptide is Serpentine receptor class delta-63 (srd-63) (Caenorhabditis elegans).